Here is a 106-residue protein sequence, read N- to C-terminus: Hydrogenase expression/formation protein HoxL (106 aa).

The protein belongs to the HupF/HypC family.

This Azotobacter vinelandii protein is Hydrogenase expression/formation protein HoxL (hoxL).